Reading from the N-terminus, the 80-residue chain is MKVLCEDVNGPRSSLGRAWSHMSWLYYQYLLVTALYMLEPWERTVFNSMLVSIVGMALYTGYIFMPQHILAILHYFEIVQ.

Topologically, residues 1–21 (MKVLCEDVNGPRSSLGRAWSH) are cytoplasmic. The helical transmembrane segment at 22–38 (MSWLYYQYLLVTALYML) threads the bilayer. The Lumenal portion of the chain corresponds to 39 to 43 (EPWER). Residues 44–66 (TVFNSMLVSIVGMALYTGYIFMP) traverse the membrane as a helical segment. The Cytoplasmic segment spans residues 67 to 80 (QHILAILHYFEIVQ).

It belongs to the SPTSS family. SPTSSA subfamily. Component of the serine palmitoyltransferase (SPT) complex, which is composed of SPTLC1, SPTLC2 or SPTLC3 and SPTSSA or SPTSSB. The heterodimer consisting of SPTLC1 and SPTLC2/SPTLC3 forms the catalytic core of the enzyme, while SPTSSA or SPTSSB subunits determine substrate specificity. SPT also interacts with ORMDL proteins, especially ORMDL3, which negatively regulate SPT activity in the presence of ceramides.

The protein resides in the endoplasmic reticulum membrane. It functions in the pathway lipid metabolism; sphingolipid metabolism. Its function is as follows. Component of the serine palmitoyltransferase multisubunit enzyme (SPT) that catalyzes the initial and rate-limiting step in sphingolipid biosynthesis by condensing L-serine and activated acyl-CoA (most commonly palmitoyl-CoA) to form long-chain bases. The SPT complex is composed of SPTLC1, SPTLC2 or SPTLC3 and SPTSSA or SPTSSB. Within this complex, the heterodimer consisting of SPTLC1 and SPTLC2/SPTLC3 forms the catalytic core. Within the SPT complex, SPTSSA stimulates the catalytic activity and plays a role in substrate specificity, which depends upon the overall complex composition. The SPTLC1-SPTLC2-SPTSSA complex shows a strong preference for C16-CoA substrate, while the SPTLC1-SPTLC3-SPTSSA isozyme uses both C14-CoA and C16-CoA as substrates, with a slight preference for C14-CoA. Independently of its action as a SPT component, may be involved in MBOAT7 localization to mitochondria-associated membranes, a membrane bridge between the endoplasmic reticulum and mitochondria, may hence affect MBOAT7-catalyzed incorporation of arachidonic acid into phosphatidylinositol. This chain is Serine palmitoyltransferase small subunit A-A (sptssa-a), found in Xenopus laevis (African clawed frog).